The sequence spans 60 residues: MKNNKNLFDLEIKKETSQNTDELEPQTAGPAIRASVKQCQKTLKATRLFTVSCKGKNGCK.

Positions 1–26 (MKNNKNLFDLEIKKETSQNTDELEPQ) are excised as a propeptide. Residues 1-29 (MKNNKNLFDLEIKKETSQNTDELEPQTAG) are disordered. Threonine 27 bears the 2-oxobutanoic acid mark. Residues 35–39 (SVKQC) constitute a cross-link (lanthionine (Ser-Cys)). 2 positions are modified to 2,3-didehydrobutyrine: threonine 42 and threonine 46. A cross-link (beta-methyllanthionine (Thr-Cys)) is located at residues 50–53 (TVSC). A cross-link (lanthionine (Ser-Cys)) is located at residues 52–59 (SCKGKNGC).

It belongs to the type A lantibiotic family. In terms of processing, maturation of lantibiotics involves the enzymatic conversion of Thr, and Ser into dehydrated AA and the formation of thioether bonds with cysteine. This is followed by membrane translocation and cleavage of the modified precursor. After proteolysis of the propeptide, the N-terminal 2,3-didehydrobutyrine hydrolyzes to 2-oxobutanoic acid, possibly spontaneously.

Functionally, lanthionine-containing peptide antibiotic (lantibiotic) active on Gram-positive bacteria. The bactericidal activity of lantibiotics is based on depolarization of energized bacterial cytoplasmic membranes, initiated by the formation of aqueous transmembrane pores. This is Lantibiotic Pep5 (pepA) from Staphylococcus epidermidis.